Reading from the N-terminus, the 813-residue chain is Sorting nexin-29 (813 aa).

The region spanning 36 to 180 (SDSDSRVTCL…ILFAINIDNK (145 aa)) is the RUN domain. Phosphoserine is present on residues Ser-268, Ser-291, Ser-292, Ser-330, and Ser-344. Positions 269-299 (FDDEEDEQNSGDVFKKTPGAGESSEDNSDRS) are disordered. Acidic residues predominate over residues 346 to 357 (DDEDVDENEDDV). A disordered region spans residues 346 to 378 (DDEDVDENEDDVYGNSSGRKHRGHSESPEKPLE). Phosphoserine is present on residues Ser-445 and Ser-450. Residues 466 to 545 (TISELRQATV…VLKVQLKKYV (80 aa)) adopt a coiled-coil conformation. Ser-639 bears the Phosphoserine mark. Residue Thr-641 is modified to Phosphothreonine. Phosphoserine occurs at positions 642 and 646. The 124-residue stretch at 656 to 779 (ALINVWIPSV…PFFVDITPPG (124 aa)) folds into the PX domain. Positions 778 to 813 (PGEPVNSRPKAASRFPKLSRGQPRETRNVEPQSGDL) are disordered.

It belongs to the sorting nexin family.

The sequence is that of Sorting nexin-29 (SNX29) from Homo sapiens (Human).